We begin with the raw amino-acid sequence, 260 residues long: UPF0246 protein Bphyt_1375 (260 aa).

This sequence belongs to the UPF0246 family.

This Paraburkholderia phytofirmans (strain DSM 17436 / LMG 22146 / PsJN) (Burkholderia phytofirmans) protein is UPF0246 protein Bphyt_1375.